The following is an 811-amino-acid chain: tRNA(Met) cytidine acetyltransferase TmcA (811 aa).

ATP is bound by residues glutamine 267 and arginine 440. An N-acetyltransferase domain is found at 474 to 663; sequence RKEVYLEEPD…GEFTAIVLKP (190 aa). Residues 590 to 592, glutamate 630, and arginine 637 contribute to the acetyl-CoA site; that span reads IAT.

Belongs to the TmcA family.

The protein localises to the cytoplasm. The catalysed reaction is cytidine(34) in elongator tRNA(Met) + acetyl-CoA + ATP + H2O = N(4)-acetylcytidine(34) in elongator tRNA(Met) + ADP + phosphate + CoA + H(+). The enzyme catalyses a cytidine in RNA + acetyl-CoA + ATP + H2O = an N(4)-acetylcytidine in RNA + ADP + phosphate + CoA + H(+). It catalyses the reaction a cytidine in tRNA + acetyl-CoA + ATP + H2O = an N(4)-acetylcytidine in tRNA + ADP + phosphate + CoA + H(+). It carries out the reaction a cytidine in mRNA + acetyl-CoA + ATP + H2O = an N(4)-acetylcytidine in mRNA + ADP + phosphate + CoA + H(+). Its function is as follows. Catalyzes the formation of N(4)-acetylcytidine (ac(4)C) at the wobble position of tRNA(Met), by using acetyl-CoA as an acetyl donor and ATP (or GTP). Catalyzes the formation of 404 N(4)-acetylcytidine (ac(4)C) sites in RNA, almost always on the middle C of a CCG motif. There 173 ac(4)C sites in rRNA, 35 in non-coding (nc)RNA, 119 in mRNA and 77 in tRNA. More acetylation is observed at 85 and 95 than at 65 or 75 degrees Celsius. The chain is tRNA(Met) cytidine acetyltransferase TmcA from Thermococcus kodakarensis (strain ATCC BAA-918 / JCM 12380 / KOD1) (Pyrococcus kodakaraensis (strain KOD1)).